A 273-amino-acid polypeptide reads, in one-letter code: Large ribosomal subunit protein uL2 (273 aa).

Residues 221–262 (RGTAMNPVDHPHGGGEGRNFGKHPVTPWGVQTKGKKTRHNKR) form a disordered region. Positions 253-262 (KGKKTRHNKR) are enriched in basic residues.

This sequence belongs to the universal ribosomal protein uL2 family. As to quaternary structure, part of the 50S ribosomal subunit. Forms a bridge to the 30S subunit in the 70S ribosome.

One of the primary rRNA binding proteins. Required for association of the 30S and 50S subunits to form the 70S ribosome, for tRNA binding and peptide bond formation. It has been suggested to have peptidyltransferase activity; this is somewhat controversial. Makes several contacts with the 16S rRNA in the 70S ribosome. The polypeptide is Large ribosomal subunit protein uL2 (Haemophilus influenzae (strain ATCC 51907 / DSM 11121 / KW20 / Rd)).